A 95-amino-acid polypeptide reads, in one-letter code: Fatty acid-binding protein, liver (95 aa).

N6-succinyllysine is present on residues K13 and K18. Residue S21 is modified to Phosphoserine. At K28 the chain carries N6-succinyllysine. T33 carries the post-translational modification Phosphothreonine. A Phosphoserine modification is found at S38. An N6-succinyllysine mark is found at K39, K47, and K59. Residue S69 is modified to Phosphoserine. At K90 the chain carries N6-succinyllysine.

Belongs to the calycin superfamily. Fatty-acid binding protein (FABP) family. In terms of assembly, monomer.

It is found in the cytoplasm. In terms of biological role, this protein binds free fatty acids and their coenzyme A derivatives, bilirubin, and some other small molecules in the cytoplasm; it may be involved in intracellular lipid transport. In Chaetophractus villosus (South American armadillo), this protein is Fatty acid-binding protein, liver (FABP1).